Reading from the N-terminus, the 586-residue chain is Glutamate--tRNA ligase (586 aa).

Residues 114 to 124 carry the 'HIGH' region motif; that stretch reads PNPNGPWHVGH. 2 stretches are compositionally biased toward basic and acidic residues: residues 431 to 443 and 459 to 468; these read ARGEGPEESHEAV and HPEHPDRGDR. Residues 431–468 form a disordered region; it reads ARGEGPEESHEAVEVPVDDGPDEATPQVHPEHPDRGDR.

The protein belongs to the class-I aminoacyl-tRNA synthetase family. Glutamate--tRNA ligase type 2 subfamily.

It is found in the cytoplasm. It catalyses the reaction tRNA(Glu) + L-glutamate + ATP = L-glutamyl-tRNA(Glu) + AMP + diphosphate. Its function is as follows. Catalyzes the attachment of glutamate to tRNA(Glu) in a two-step reaction: glutamate is first activated by ATP to form Glu-AMP and then transferred to the acceptor end of tRNA(Glu). The protein is Glutamate--tRNA ligase of Halobacterium salinarum (strain ATCC 29341 / DSM 671 / R1).